The sequence spans 665 residues: Prelamin-A/C (665 aa).

Position 1 is an N-acetylmethionine (Met1). Residues 1-27 (METPSQRRPTRSGAQASSTPLSPTRIT) are disordered. Residues 1–33 (METPSQRRPTRSGAQASSTPLSPTRITRLQEKE) form a head region. The interaction with MLIP stretch occupies residues 1–130 (METPSQRRPT…TKKEGDLLAA (130 aa)). Thr3 carries the post-translational modification Phosphothreonine. The residue at position 5 (Ser5) is a Phosphoserine. Thr10 carries the post-translational modification Phosphothreonine. Ser12 and Ser18 each carry phosphoserine. Thr19 carries the post-translational modification Phosphothreonine. Ser22 bears the Phosphoserine mark. Positions 31 to 387 (EKEDLQELND…KLLEGEEERL (357 aa)) constitute an IF rod domain. Lys32 bears the N6-acetyllysine; alternate mark. The residue at position 32 (Lys32) is an N6-succinyllysine; alternate. A Glycyl lysine isopeptide (Lys-Gly) (interchain with G-Cter in SUMO2); alternate cross-link involves residue Lys32. The tract at residues 34–70 (DLQELNDRLAVYIDRVRSLETENAGLRLRITESEEVV) is coil 1A. Phosphoserine occurs at positions 51, 66, and 71. The interval 71–80 (SREVSGIKAA) is linker 1. N6-acetyllysine is present on residues Lys78 and Lys97. Positions 81–218 (YEAELGDARK…NIYSEELRET (138 aa)) are coil 1B. Lys97 participates in a covalent cross-link: Glycyl lysine isopeptide (Lys-Gly) (interchain with G-Cter in SUMO2). The residue at position 107 (Ser107) is a Phosphoserine. Lys108, Lys114, Lys123, Lys135, Lys144, and Lys155 each carry N6-acetyllysine. Lys171 is modified (N6-acetyllysine; alternate). At Lys171 the chain carries N6-succinyllysine; alternate. Lys171 is covalently cross-linked (Glycyl lysine isopeptide (Lys-Gly) (interchain with G-Cter in SUMO2); alternate). 3 positions are modified to N6-acetyllysine: Lys180, Lys201, and Lys208. A Glycyl lysine isopeptide (Lys-Gly) (interchain with G-Cter in SUMO2); alternate cross-link involves residue Lys201. Lys201 is covalently cross-linked (Glycyl lysine isopeptide (Lys-Gly) (interchain with G-Cter in SUMO); alternate). Residue Lys208 forms a Glycyl lysine isopeptide (Lys-Gly) (interchain with G-Cter in SUMO2) linkage. Residue Ser212 is modified to Phosphoserine. Glycyl lysine isopeptide (Lys-Gly) (interchain with G-Cter in SUMO2) cross-links involve residues Lys219 and Lys233. The interval 219 to 242 (KRRHETRLVEIDNGKQREFESRLA) is linker 2. An N6-acetyllysine mark is found at Lys233, Lys260, Lys265, and Lys270. Positions 243–383 (DALQELRAQH…HAYRKLLEGE (141 aa)) are coil 2. Lys260 is covalently cross-linked (Glycyl lysine isopeptide (Lys-Gly) (interchain with G-Cter in SUMO2); alternate). Lys270 participates in a covalent cross-link: Glycyl lysine isopeptide (Lys-Gly) (interchain with G-Cter in SUMO2); alternate. Ser277, Ser282, Ser301, and Ser307 each carry phosphoserine. Lys311 is covalently cross-linked (Glycyl lysine isopeptide (Lys-Gly) (interchain with G-Cter in SUMO2); alternate). N6-acetyllysine is present on residues Lys311, Lys316, and Lys341. Glycyl lysine isopeptide (Lys-Gly) (interchain with G-Cter in SUMO2) cross-links involve residues Lys366 and Lys378. The segment at 384 to 442 (EERLRLSPSPTSQRSRGRASSHSSQSQGGGSVTKKRKLESSESRSSFSQHARTSGRVAV) is disordered. The interval 384–665 (EERLRLSPSP…TQSSQNCSIM (282 aa)) is tail. Phosphoserine is present on residues Ser390, Ser392, Ser395, Ser398, Ser403, Ser404, Ser406, Ser407, Ser409, and Ser414. Positions 395–409 (SQRSRGRASSHSSQS) are enriched in low complexity. Thr416 bears the Phosphothreonine mark. Lys417 is modified (N6-acetyllysine). Residues Lys417 and Lys420 each participate in a glycyl lysine isopeptide (Lys-Gly) (interchain with G-Cter in SUMO2) cross-link. A Nuclear localization signal motif is present at residues 417 to 422 (KKRKLE). Ser423, Ser426, Ser429, and Ser431 each carry phosphoserine. Residues 428–545 (SSFSQHARTS…EEVAMRKLVR (118 aa)) enclose the LTD domain. Residue Lys450 forms a Glycyl lysine isopeptide (Lys-Gly) (interchain with G-Cter in SUMO2); alternate linkage. 2 positions are modified to N6-acetyllysine: Lys450 and Lys457. Residues Ser458 and Ser463 each carry the phosphoserine modification. Glycyl lysine isopeptide (Lys-Gly) (interchain with G-Cter in SUMO2) cross-links involve residues Lys470 and Lys486. Lys486 carries the post-translational modification N6-acetyllysine. Thr496 is modified (phosphothreonine). Phosphoserine is present on Ser500. Phosphothreonine occurs at positions 505 and 510. Ser546 is subject to Phosphoserine. Thr548 is subject to Phosphothreonine. Positions 552 to 561 (DNDDEEEDGD) are enriched in acidic residues. Positions 552–577 (DNDDEEEDGDELLHHHRGSHCSSSGD) are disordered. Phosphoserine is present on residues Ser570 and Ser573. A Glycyl lysine isopeptide (Lys-Gly) (interchain with G-Cter in SUMO2); alternate cross-link involves residue Lys599. Residue Lys599 forms a Glycyl lysine isopeptide (Lys-Gly) (interchain with G-Cter in SUMO1); alternate linkage. Phosphoserine occurs at positions 613, 614, 617, and 620. 2 O-linked (GlcNAc) serine glycosylation sites follow: Ser626 and Ser629. Residues Ser629, Ser633, Ser637, and Ser653 each carry the phosphoserine modification. Positions 648 to 662 (LLGNSSPRTQSSQNC) are cleaved as a propeptide — removed in Lamin-A/C form. Residue Cys662 is modified to Cysteine methyl ester. A lipid anchor (S-farnesyl cysteine) is attached at Cys662. Residues 663–665 (SIM) constitute a propeptide, removed in Prelamin-A/C form and in Lamin-A/C form.

This sequence belongs to the intermediate filament family. In terms of assembly, homodimer of lamin A and lamin C. Lamin dimers then assemble into dimeric head-to-tail polymers. Ultimately, two head-to-tail polymers assemble laterally into a protofilament with a uniformly shaped rod of 3.5 nm in diameter. Interacts with lamin-associated polypeptides IA, IB and TMPO-alpha, RB1 and with emerin. Interacts with SREBF1, SREBF2, SUN2 and TMEM43. Interacts with TMEM201. Proteolytically processed isoform A interacts with NARF. Interacts with SUN1. Interacts with MLIP. Interacts with DMPK; may regulate nuclear envelope stability. Interacts with SUV39H1; the interaction increases stability of SUV39H1. Interacts with SYNE2. Interacts with ITSN1 isoform 2. Interacts with IFFO1; enables the formation of an interior nucleoskeleton that is recruited to DNA double-strand breaks. Interacts with EMD. As to quaternary structure, interacts (via C-terminus) with LEMD2 (via N-terminus) (in vitro). Proteolytic cleavage of the C-terminal of 18 residues of prelamin-A/C results in the production of lamin-A/C. The prelamin-A/C maturation pathway includes farnesylation of CAAX motif by protein farnesyltransferase (FNTA and FNTB), removal of the last three amino acids (-AAX) by RCE1/FACE2 and/or ZMPSTE24, methylation of the C-terminal cysteine by ICMT and endoproteolytic removal of the last 15 C-terminal amino acids by ZMPSTE24. Proteolytic cleavage requires prior farnesylation and methylation, and absence of these blocks cleavage. Post-translationally, farnesylation of prelamin-A/C facilitates nuclear envelope targeting. In terms of processing, phosphorylation plays a key role in lamin organization, subcellular localization and nuclear envelope disintegration. Phosphorylation by CDK1 at Ser-22 and Ser-392 at the onset of mitosis drives lamin disassembly and nuclear envelope breakdown. Phosphorylation at Ser-22 and Ser-392 during interphase promotes localization to the nucleoplasm and regulates lamina assembly. Phosphorylation at Ser-22, Ser-392 and Ser-629 during interphase causes redistribution between the nucleus and the cytoplasm. Phosphorylation at Ser-22 by CDK1 regulates matrix stiffness. Phosphorylation status of Ser-22 determines its localization between double-strand break (DSB) sites and the nuclear matrix. Phosphorylated by ATR at Ser-282 in response to DNA damage, leading to lamin disassembly and nuclear envelope rupture. Phosphorylation also regulates stability in micronuclei arising from genome instability: phosphorylation at Ser-395 by ATR in response to genome instability and double-stranded DNA breaks primes LMNA for subsequent phosphorylation at Ser-392 by CDK1 and micronuclei envelope rupture. The rupture of micronuclear envelope triggers the cGAS-STING pathway thereby activating the type I interferon response and innate immunity. Acetylation by KAT8 is required for nuclear architecture. Post-translationally, sumoylation is necessary for the localization to the nuclear envelope.

The protein resides in the nucleus lamina. The protein localises to the nucleus envelope. It localises to the nucleus. Its subcellular location is the nucleoplasm. It is found in the nucleus matrix. In terms of biological role, lamins are intermediate filament proteins that assemble into a filamentous meshwork, and which constitute the major components of the nuclear lamina, a fibrous layer on the nucleoplasmic side of the inner nuclear membrane. Lamins provide a framework for the nuclear envelope, bridging the nuclear envelope and chromatin, thereby playing an important role in nuclear assembly, chromatin organization, nuclear membrane and telomere dynamics. Lamin A and C also regulate matrix stiffness by conferring nuclear mechanical properties. The structural integrity of the lamina is strictly controlled by the cell cycle, as seen by the disintegration and formation of the nuclear envelope in prophase and telophase, respectively. Lamin A and C are present in equal amounts in the lamina of mammals. Also invoved in DNA repair: recruited by DNA repair proteins XRCC4 and IFFO1 to the DNA double-strand breaks (DSBs) to prevent chromosome translocation by immobilizing broken DNA ends. Required for normal development of peripheral nervous system and skeletal muscle and for muscle satellite cell proliferation. Required for osteoblastogenesis and bone formation. Also prevents fat infiltration of muscle and bone marrow, helping to maintain the volume and strength of skeletal muscle and bone. Required for cardiac homeostasis. Functionally, prelamin-A/C can accelerate smooth muscle cell senescence. It acts to disrupt mitosis and induce DNA damage in vascular smooth muscle cells (VSMCs), leading to mitotic failure, genomic instability, and premature senescence. The polypeptide is Prelamin-A/C (Lmna) (Rattus norvegicus (Rat)).